We begin with the raw amino-acid sequence, 1111 residues long: Protein STU1 (1111 aa).

HEAT repeat units lie at residues 95–133 and 167–205; these read ALPL…ERSV and YVPT…KSDL. Disordered stretches follow at residues 225-245 and 476-751; these read ELNP…VEPS and RLLQ…VDEE. Positions 502–511 are enriched in polar residues; that stretch reads SKSTMGTSKP. Residues 704 to 714 are compositionally biased toward basic and acidic residues; that stretch reads PREEQRFVKPV.

This sequence belongs to the CLASP family. Interacts with microtubules.

Its subcellular location is the cytoplasm. The protein localises to the cytoskeleton. It localises to the nucleus. The protein resides in the spindle. Functionally, microtubule binding protein that promotes the stabilization of dynamic microtubules. Required for mitotic spindle formation. The protein is Protein STU1 (STU1) of Chaetomium globosum (strain ATCC 6205 / CBS 148.51 / DSM 1962 / NBRC 6347 / NRRL 1970) (Soil fungus).